We begin with the raw amino-acid sequence, 392 residues long: Chaperone protein DnaJ 1 (392 aa).

In terms of domain architecture, J spans 4-67 (DYYEILGVSH…QKRAVFDRGG (64 aa)). The CR-type zinc-finger motif lies at 134-216 (GVTKSLEVDT…CSGEGRVRTT (83 aa)). Zn(2+)-binding residues include cysteine 147, cysteine 150, cysteine 164, cysteine 167, cysteine 190, cysteine 193, cysteine 204, and cysteine 207. 4 CXXCXGXG motif repeats span residues 147–154 (CPKCQGKG), 164–171 (CDTCQGRG), 190–197 (CPTCHGYG), and 204–211 (CQECSGEG). The interval 367 to 392 (ETNASASVEKSGGRGMFSRIKEAFGG) is disordered.

It belongs to the DnaJ family. In terms of assembly, homodimer. Zn(2+) serves as cofactor.

It is found in the cytoplasm. In terms of biological role, participates actively in the response to hyperosmotic and heat shock by preventing the aggregation of stress-denatured proteins and by disaggregating proteins, also in an autonomous, DnaK-independent fashion. Unfolded proteins bind initially to DnaJ; upon interaction with the DnaJ-bound protein, DnaK hydrolyzes its bound ATP, resulting in the formation of a stable complex. GrpE releases ADP from DnaK; ATP binding to DnaK triggers the release of the substrate protein, thus completing the reaction cycle. Several rounds of ATP-dependent interactions between DnaJ, DnaK and GrpE are required for fully efficient folding. Also involved, together with DnaK and GrpE, in the DNA replication of plasmids through activation of initiation proteins. The chain is Chaperone protein DnaJ 1 from Cutibacterium acnes (strain DSM 16379 / KPA171202) (Propionibacterium acnes).